The primary structure comprises 371 residues: MSSSNSNNGGPPLAPRLARFVRQDVQNMHAYAIQPSDGFVKLDAMENPHRLPAALQAELGRRLGALAINRYPGTRTDELRAALARHAGLPPGCALMLGNGSDELISLLSMACDVPGATVLAPLPGFVMYEMSARLQGLRFVGVPLTADFELDAAAMLAAVREHRPALTYLAYPNNPTANLWDDAVIERVVDAVREHGGLVVIDEAYQPFASRSYIDRLAHHDHVLLMRTLSKFGLAGVRLGYLMGPTALVAEIDKVRPPYNVSVLNCEAALFALEHEDEFARQAAVLRAERARLLDALRAMSGATPFPSEANMVLVRVPDAKAAFEGLKARGVLVKNVSGLHPLLANCLRLTVGLPEENDQMIAALKGILS.

Residue lysine 232 is modified to N6-(pyridoxal phosphate)lysine.

The protein belongs to the class-II pyridoxal-phosphate-dependent aminotransferase family. Histidinol-phosphate aminotransferase subfamily. Homodimer. Pyridoxal 5'-phosphate serves as cofactor.

It catalyses the reaction L-histidinol phosphate + 2-oxoglutarate = 3-(imidazol-4-yl)-2-oxopropyl phosphate + L-glutamate. It functions in the pathway amino-acid biosynthesis; L-histidine biosynthesis; L-histidine from 5-phospho-alpha-D-ribose 1-diphosphate: step 7/9. The chain is Histidinol-phosphate aminotransferase from Methylibium petroleiphilum (strain ATCC BAA-1232 / LMG 22953 / PM1).